Consider the following 509-residue polypeptide: Anaerobic nitric oxide reductase transcription regulator NorR (509 aa).

Aspartate 56 is subject to 4-aspartylphosphate. The Sigma-54 factor interaction domain maps to 186–415; it reads MIGRSPAMDR…LEHAIHRAAV (230 aa). ATP-binding positions include 214–221 and 277–286; these read GETGVGKE and ADKGTLFLDE. Residues 484–503 constitute a DNA-binding region (H-T-H motif); that stretch reads WAATARALEMDGGNLHRLAR.

It participates in nitrogen metabolism; nitric oxide reduction. Functionally, required for the expression of anaerobic nitric oxide (NO) reductase, acts as a transcriptional activator for at least the norVW operon. Activation also requires sigma-54. This chain is Anaerobic nitric oxide reductase transcription regulator NorR, found in Aeromonas salmonicida (strain A449).